The sequence spans 554 residues: Inactive sesquithujene synthase B (554 aa).

2 residues coordinate Mg(2+): aspartate 308 and aspartate 312. Substrate is bound by residues aspartate 308, aspartate 312, arginine 449, and asparagine 452. Residues aspartate 308–aspartate 312 carry the DDXXD motif motif. Mg(2+)-binding residues include asparagine 452, serine 456, and glutamate 460.

It belongs to the terpene synthase family. Monomer. Mg(2+) serves as cofactor. Requires Mn(2+) as cofactor.

It localises to the cytoplasm. The protein operates within secondary metabolite biosynthesis; terpenoid biosynthesis. Functionally, non-functional sesquiterpene synthase having less than 1% of the activity found in TPS5A. In Zea mays (Maize), this protein is Inactive sesquithujene synthase B.